The sequence spans 268 residues: Nitrite transporter NirC (268 aa).

The Cytoplasmic segment spans residues 1–25; sequence MFTDTINKCAANAARIARLSANNPL. A helical membrane pass occupies residues 26-46; the sequence is GFWVSSAMAGAYVGLGIILIF. The Periplasmic portion of the chain corresponds to 47 to 59; sequence TLGNLLDPSVRPL. Residues 60–80 form a helical membrane-spanning segment; that stretch reads VMGATFGIALTLVIIAGSELF. The Cytoplasmic portion of the chain corresponds to 81–112; the sequence is TGHTMFLTFGVKAGSISHGQMWAILPQTWLGN. The chain crosses the membrane as a helical span at residues 113 to 133; the sequence is LVGSVFVAMLYSWGGGSLLPV. At 134-151 the chain is on the periplasmic side; that stretch reads DTSIVHSVALAKTTAPAM. The chain crosses the membrane as a helical span at residues 152 to 172; that stretch reads VLFFKGALCNWLVCLAIWMAL. Topologically, residues 173–179 are cytoplasmic; it reads RTEGAAK. A helical membrane pass occupies residues 180–200; that stretch reads FIAIWWCLLAFIASGYEHSIA. Over 201 to 225 the chain is Periplasmic; sequence NMTLFALSWFGNHSEAYTLAGIGHN. A helical transmembrane segment spans residues 226–246; that stretch reads LLWVTLGNTLSGAVFMGLGYW. The Cytoplasmic portion of the chain corresponds to 247–268; sequence YATPKANRPVADKFNQTETAAG.

This sequence belongs to the FNT transporter (TC 1.A.16) family.

Its subcellular location is the cell inner membrane. Catalyzes nitrite uptake and nitrite export across the cytoplasmic membrane. Is up to 10-fold more active than NarK or NarU in nitrite uptake for subsequent reduction in the cytoplasm by the NirB/NirD nitrite reductase. This chain is Nitrite transporter NirC (nirC), found in Escherichia coli (strain K12).